Reading from the N-terminus, the 455-residue chain is Major capsid protein (455 aa).

This sequence belongs to the ascoviridae capsid protein family.

It localises to the virion. In terms of biological role, major protein of the capsid. This is Major capsid protein (MCP) from Heliothis virescens ascovirus 3e (HvAV-3e).